The sequence spans 320 residues: HPr kinase/phosphorylase (320 aa).

Catalysis depends on residues H141 and K162. Residue G156–S163 participates in ATP binding. A Mg(2+)-binding site is contributed by S163. The active-site Proton acceptor; for phosphorylation activity. Proton donor; for dephosphorylation activity is D180. The important for the catalytic mechanism of both phosphorylation and dephosphorylation stretch occupies residues L204 to N213. Mg(2+) is bound at residue E205. R248 is a catalytic residue. The interval P269–R274 is important for the catalytic mechanism of dephosphorylation.

It belongs to the HPrK/P family. Homohexamer. It depends on Mg(2+) as a cofactor.

It catalyses the reaction [HPr protein]-L-serine + ATP = [HPr protein]-O-phospho-L-serine + ADP + H(+). The enzyme catalyses [HPr protein]-O-phospho-L-serine + phosphate + H(+) = [HPr protein]-L-serine + diphosphate. Functionally, catalyzes the ATP- as well as the pyrophosphate-dependent phosphorylation of a specific serine residue in HPr, a phosphocarrier protein of the phosphoenolpyruvate-dependent sugar phosphotransferase system (PTS). HprK/P also catalyzes the pyrophosphate-producing, inorganic phosphate-dependent dephosphorylation (phosphorolysis) of seryl-phosphorylated HPr (P-Ser-HPr). This Neisseria gonorrhoeae (strain ATCC 700825 / FA 1090) protein is HPr kinase/phosphorylase.